Here is a 576-residue protein sequence, read N- to C-terminus: Sulfite reductase [NADPH] hemoprotein beta-component (576 aa).

The [4Fe-4S] cluster site is built by cysteine 435, cysteine 441, cysteine 480, and cysteine 484. Cysteine 484 serves as a coordination point for siroheme.

The protein belongs to the nitrite and sulfite reductase 4Fe-4S domain family. As to quaternary structure, alpha(8)-beta(8). The alpha component is a flavoprotein, the beta component is a hemoprotein. Siroheme serves as cofactor. The cofactor is [4Fe-4S] cluster.

It catalyses the reaction hydrogen sulfide + 3 NADP(+) + 3 H2O = sulfite + 3 NADPH + 4 H(+). The protein operates within sulfur metabolism; hydrogen sulfide biosynthesis; hydrogen sulfide from sulfite (NADPH route): step 1/1. Its function is as follows. Component of the sulfite reductase complex that catalyzes the 6-electron reduction of sulfite to sulfide. This is one of several activities required for the biosynthesis of L-cysteine from sulfate. The sequence is that of Sulfite reductase [NADPH] hemoprotein beta-component from Proteus mirabilis (strain HI4320).